The following is a 356-amino-acid chain: Leucine-rich repeat and transmembrane domain-containing protein 1 (356 aa).

The signal sequence occupies residues Met-1–Ser-32. The region spanning Cys-33–Pro-62 is the LRRNT domain. Residues Cys-33 to Thr-299 are Extracellular-facing. LRR repeat units follow at residues Trp-63–Ser-84, Leu-87–Gly-108, His-111–Ala-132, Gly-135–Pro-156, and Asn-159–Ala-180. N-linked (GlcNAc...) asparagine glycosylation is found at Asn-92 and Asn-116. A glycan (N-linked (GlcNAc...) asparagine) is linked at Asn-159. The LRRCT domain maps to Asn-192–Leu-246. A compositionally biased stretch (polar residues) spans Leu-255–Gln-277. A disordered region spans residues Leu-255 to Pro-288. Residues Val-300–Tyr-320 form a helical membrane-spanning segment. Topologically, residues Gly-321–Ala-356 are cytoplasmic.

It is found in the membrane. The protein is Leucine-rich repeat and transmembrane domain-containing protein 1 (Lrtm1) of Mus musculus (Mouse).